We begin with the raw amino-acid sequence, 502 residues long: MRCSPGGVWLALAASLLHVSLQGEFQRKLYKELVKNYNPLERPVANDSQPLTVYFSLSLLQIMDVDEKNQVLTTNIWLQMSWTDHYLQWNVSEYPGVKTVRFPDGQIWKPDILLYNSADERFDATFHTNVLVNSSGHCQYLPPGIFKSSCYIDVRWFPFDVQHCKLKFGSWSYGGWSLDLQMQEADISGYIPNGEWDLVGIPGKRSERFYECCKEPYPDVTFTVTMRRRTLYYGLNLLIPCVLISALALLVFLLPADSGEKISLGITVLLSLTVFMLLVAEIMPATSDSVPLIAQYFASTMIIVGLSVVVTVIVLQYHHHDPDGGKMPKWTRVILLNWCAWFLRMKRPGEDKVRPACQHKQRRCSLASVEMSAVAPPPASNGNLLYIGFRGLDGVHCVPTPDSGVVCGRMACSPTHDEHLLHGGQPPEGDPDLAKILEEVRYIANRFRCQDESEAVCSEWKFAACVVDRLCLMAFSVFTIICTIGILMSAPNFVEAVSKDFA.

Residues 1–22 (MRCSPGGVWLALAASLLHVSLQ) form the signal peptide. The Extracellular segment spans residues 23-233 (GEFQRKLYKE…VTMRRRTLYY (211 aa)). Ca(2+) contacts are provided by R42 and V44. Residues N46, N90, and N133 are each glycosylated (N-linked (GlcNAc...) asparagine). A disulfide bond links C150 and C164. Residues S172 and Y210 each coordinate Ca(2+). C212 and C213 are joined by a disulfide. The next 3 helical transmembrane spans lie at 234–254 (GLNLLIPCVLISALALLVFLL), 259–279 (GEKISLGITVLLSLTVFMLLV), and 292–315 (LIAQYFASTMIIVGLSVVVTVIVL). Residues 260-267 (EKISLGIT) are essential for TMEM35A/NACHO-mediated proper subunit assembly and trafficking to cell membrane. Residues 316–466 (QYHHHDPDGG…CSEWKFAACV (151 aa)) lie on the Cytoplasmic side of the membrane. The chain crosses the membrane as a helical span at residues 467–489 (VDRLCLMAFSVFTIICTIGILMS).

The protein belongs to the ligand-gated ion channel (TC 1.A.9) family. Acetylcholine receptor (TC 1.A.9.1) subfamily. Alpha-7/CHRNA7 sub-subfamily. Homopentamer. Can also form heteropentamers with CHRNB2, mainly found in basal forebrain cholinergic neurons. Interacts with RIC3; which is required for proper folding and assembly. Interacts with LYPD6. Interacts with CANX. Post-translationally, glycosylations at Asn-46, Asn-90 and Asn-133 are essential for TMEM35A/NACHO-mediated proper subunit assembly and trafficking to the cell membrane. In terms of tissue distribution, expressed in neuronal cells. Expressed in macrophages (at protein level).

It localises to the postsynaptic cell membrane. The protein resides in the cell membrane. The catalysed reaction is Ca(2+)(in) = Ca(2+)(out). The enzyme catalyses K(+)(in) = K(+)(out). It carries out the reaction Na(+)(in) = Na(+)(out). It catalyses the reaction choline(out) = choline(in). The catalysed reaction is NH4(+)(in) = NH4(+)(out). The enzyme catalyses L-arginine(in) = L-arginine(out). It carries out the reaction guanidine(out) = guanidine(in). With respect to regulation, activated by a myriad of ligands such as acetylcholine, cytisine, nicotine, choline and epibatidine. Oligomeric amyloid-beta protein 42 activates specifially CHRNA7:CHRNB2 nAchRs. Activity is modulated by positive allosteric modulators (PAMs), such as flavonoids, with a wide range of chemical diversity, pharmacological sensitivity and efficacy. AChR activity is inhibited by the antagonists alpha-conotoxons RgIA, ImI and ImII, small disulfide-constrained peptides from cone snails. Alpha-conotoxin PnIC selectively inhibits CHRNA7:CHRNB2 over CHRNA7 homopentamer. Functionally, component of neuronal acetylcholine receptors (nAChRs) that function as pentameric, ligand-gated cation channels with high calcium permeability among other activities. nAChRs are excitatory neurotrasnmitter receptors formed by a collection of nAChR subunits known to mediate synaptic transmission in the nervous system and the neuromuscular junction. Each nAchR subunit confers differential attributes to channel properties, including activation, deactivation and desensitization kinetics, pH sensitivity, cation permeability, and binding to allosteric modulators. CHRNA7 forms homopentameric neuronal acetylcholine receptors abundantly expressed in the central nervous system, characterized by fast desensitization and high calcium permeability. Also forms heteropentamers with CHRNB2, mainly expressed in basal forebrain cholinergic neurons. Involved in the modulation of calcium-dependent signaling pathways and influences the release of neurotransmitters, including dopamine, glutamate and GABA. Also expressed in non-neuronal cells such as immune cells like lymphocytes, monocytes and macrophages. In T cells, activation induces metabotropic signaling that results in an increase of intracellular Ca2+ concentrations, independent of ionotropic receptor functions. In macrophages, required for acetylcholine-mediated inhibition of TNF and other inflammatory cytokine release. Once activated by acetylcholine, nicotine or other agonists, selectively inhibits production of pro-inflammatory cytokines while leaving anti-inflammatory cytokines undisturbed. Stimulates the cholinergic anti-inflammatory pathway, controlling inflammation by inhibiting NFKB nuclear translocation and activating the JAK2-STAT3 pathway, independently of ion channel activity. Also expressed in the urothelium where it modulates reflex bladder activity by increasing intracellular calcium through internal stores and decreasing basal ATP release. The sequence is that of Neuronal acetylcholine receptor subunit alpha-7 from Homo sapiens (Human).